The primary structure comprises 139 residues: Arsenate reductase (139 aa).

Active-site nucleophile residues include cysteine 10, cysteine 82, and cysteine 89. 2 disulfides stabilise this stretch: cysteine 10-cysteine 82 and cysteine 82-cysteine 89.

It belongs to the low molecular weight phosphotyrosine protein phosphatase family. Thioredoxin-coupled ArsC subfamily.

Its subcellular location is the cytoplasm. It carries out the reaction arsenate + [thioredoxin]-dithiol + H(+) = arsenite + [thioredoxin]-disulfide + H2O. In terms of biological role, catalyzes the reduction of arsenate [As(V)] to arsenite [As(III)]. The polypeptide is Arsenate reductase (Halalkalibacterium halodurans (strain ATCC BAA-125 / DSM 18197 / FERM 7344 / JCM 9153 / C-125) (Bacillus halodurans)).